Here is a 170-residue protein sequence, read N- to C-terminus: Mediator of RNA polymerase II transcription subunit 10 (170 aa).

Belongs to the Mediator complex subunit 10 family. Component of the Mediator complex.

It is found in the nucleus. In terms of biological role, component of the Mediator complex, a coactivator involved in the regulated transcription of nearly all RNA polymerase II-dependent genes. Mediator functions as a bridge to convey information from gene-specific regulatory proteins to the basal RNA polymerase II transcription machinery. Mediator is recruited to promoters by direct interactions with regulatory proteins and serves as a scaffold for the assembly of a functional preinitiation complex with RNA polymerase II and the general transcription factors. The chain is Mediator of RNA polymerase II transcription subunit 10 (NUT2) from Candida albicans (strain SC5314 / ATCC MYA-2876) (Yeast).